The chain runs to 445 residues: UDP-N-acetylglucosamine--peptide N-acetylglucosaminyltransferase stabilizing protein GtfB (445 aa).

Residues 55 to 171 form a glycosyltransferase 1 region; sequence KPLYFNQVPV…TLPGQSMRYF (117 aa).

It belongs to the GtfB family. Interacts with glycosyltransferase GtfA; probably forms a heterotetramer with 2 subunits each of GtfA and GtfB. Part of the accessory SecA2/SecY2 protein translocation apparatus.

It is found in the cell membrane. It functions in the pathway protein modification; protein glycosylation. Required for the polymorphic O-glycosylation of the serine-rich repeat protein PsrP. A stabilizing protein that is part of the accessory SecA2/SecY2 system specifically required to export serine-rich repeat cell wall proteins encoded upstream in the same operon. The GtfA-GtfB complex adds GlcNAc from UDP-GlcNAc to PsrP, attaching the first sugar residue. Stabilizes the glycosylation activity of GtfA. Has no N-acetylglucosaminyl transferase activity on its own. The chain is UDP-N-acetylglucosamine--peptide N-acetylglucosaminyltransferase stabilizing protein GtfB from Streptococcus pneumoniae serotype 4 (strain ATCC BAA-334 / TIGR4).